Consider the following 309-residue polypeptide: tRNA-cytidine(32) 2-sulfurtransferase (309 aa).

Positions 47 to 52 match the PP-loop motif motif; sequence SGGKDS. The [4Fe-4S] cluster site is built by cysteine 122, cysteine 125, and cysteine 213.

The protein belongs to the TtcA family. In terms of assembly, homodimer. Mg(2+) is required as a cofactor. The cofactor is [4Fe-4S] cluster.

The protein localises to the cytoplasm. The enzyme catalyses cytidine(32) in tRNA + S-sulfanyl-L-cysteinyl-[cysteine desulfurase] + AH2 + ATP = 2-thiocytidine(32) in tRNA + L-cysteinyl-[cysteine desulfurase] + A + AMP + diphosphate + H(+). The protein operates within tRNA modification. In terms of biological role, catalyzes the ATP-dependent 2-thiolation of cytidine in position 32 of tRNA, to form 2-thiocytidine (s(2)C32). The sulfur atoms are provided by the cysteine/cysteine desulfurase (IscS) system. This chain is tRNA-cytidine(32) 2-sulfurtransferase, found in Erwinia tasmaniensis (strain DSM 17950 / CFBP 7177 / CIP 109463 / NCPPB 4357 / Et1/99).